The sequence spans 311 residues: Putative ribose-phosphate pyrophosphokinase 2 (311 aa).

Residues aspartate 38–glutamate 40 and arginine 97–glutamine 98 each bind ATP. The Mg(2+) site is built by histidine 131 and aspartate 171. Aspartate 219 provides a ligand contact to D-ribose 5-phosphate.

This sequence belongs to the ribose-phosphate pyrophosphokinase family. Class I subfamily. In terms of assembly, homohexamer. The cofactor is Mg(2+).

Its subcellular location is the cytoplasm. It catalyses the reaction D-ribose 5-phosphate + ATP = 5-phospho-alpha-D-ribose 1-diphosphate + AMP + H(+). It participates in metabolic intermediate biosynthesis; 5-phospho-alpha-D-ribose 1-diphosphate biosynthesis; 5-phospho-alpha-D-ribose 1-diphosphate from D-ribose 5-phosphate (route I): step 1/1. Its function is as follows. Involved in the biosynthesis of the central metabolite phospho-alpha-D-ribosyl-1-pyrophosphate (PRPP) via the transfer of pyrophosphoryl group from ATP to 1-hydroxyl of ribose-5-phosphate (Rib-5-P). This is Putative ribose-phosphate pyrophosphokinase 2 from Listeria monocytogenes serotype 4b (strain F2365).